Consider the following 91-residue polypeptide: Probable Fe(2+)-trafficking protein (91 aa).

This sequence belongs to the Fe(2+)-trafficking protein family.

In terms of biological role, could be a mediator in iron transactions between iron acquisition and iron-requiring processes, such as synthesis and/or repair of Fe-S clusters in biosynthetic enzymes. The chain is Probable Fe(2+)-trafficking protein from Mannheimia succiniciproducens (strain KCTC 0769BP / MBEL55E).